The chain runs to 520 residues: DDB1- and CUL4-associated factor 17 (520 aa).

2 helical membrane-spanning segments follow: residues Val-186 to Ile-206 and Gly-222 to Ala-242.

Interacts with DDB1, CUL4A and CUL4B. As to expression, ubiquitously expressed.

The protein localises to the membrane. It is found in the nucleus. Its subcellular location is the nucleolus. It participates in protein modification; protein ubiquitination. Its function is as follows. May function as a substrate receptor for CUL4-DDB1 E3 ubiquitin-protein ligase complex. This is DDB1- and CUL4-associated factor 17 (DCAF17) from Homo sapiens (Human).